We begin with the raw amino-acid sequence, 263 residues long: uncharacterized protein (263 aa).

The protein resides in the mitochondrion. This is an uncharacterized protein from Schizosaccharomyces pombe (strain 972 / ATCC 24843) (Fission yeast).